The chain runs to 360 residues: Phospho-N-acetylmuramoyl-pentapeptide-transferase (360 aa).

The next 10 membrane-spanning stretches (helical) occupy residues 26 to 46 (AILA…KLIE), 74 to 94 (MGGL…GDLG), 97 to 117 (YVWV…IDDY), 132 to 152 (WKYI…FYST), 168 to 188 (ILPQ…VGAS), 199 to 219 (GLAI…AYLS), 236 to 256 (SGEL…FLWF), 263 to 283 (VFMG…IAVL), 288 to 308 (ILLV…ILQV), and 338 to 358 (VIVR…ATLK).

The protein belongs to the glycosyltransferase 4 family. MraY subfamily. The cofactor is Mg(2+).

It is found in the cell inner membrane. It catalyses the reaction UDP-N-acetyl-alpha-D-muramoyl-L-alanyl-gamma-D-glutamyl-meso-2,6-diaminopimeloyl-D-alanyl-D-alanine + di-trans,octa-cis-undecaprenyl phosphate = di-trans,octa-cis-undecaprenyl diphospho-N-acetyl-alpha-D-muramoyl-L-alanyl-D-glutamyl-meso-2,6-diaminopimeloyl-D-alanyl-D-alanine + UMP. Its pathway is cell wall biogenesis; peptidoglycan biosynthesis. In terms of biological role, catalyzes the initial step of the lipid cycle reactions in the biosynthesis of the cell wall peptidoglycan: transfers peptidoglycan precursor phospho-MurNAc-pentapeptide from UDP-MurNAc-pentapeptide onto the lipid carrier undecaprenyl phosphate, yielding undecaprenyl-pyrophosphoryl-MurNAc-pentapeptide, known as lipid I. The chain is Phospho-N-acetylmuramoyl-pentapeptide-transferase from Shewanella amazonensis (strain ATCC BAA-1098 / SB2B).